The chain runs to 343 residues: tRNA-specific 2-thiouridylase MnmA (343 aa).

ATP contacts are provided by residues 7 to 14 and Met33; that span reads ALSGGVDS. The active-site Nucleophile is the Cys87. Cys87 and Cys184 form a disulfide bridge. Gly111 provides a ligand contact to ATP. The segment at 135–137 is interaction with tRNA; the sequence is KDQ. The active-site Cysteine persulfide intermediate is the Cys184. An interaction with tRNA region spans residues 289–290; sequence RY.

It belongs to the MnmA/TRMU family.

Its subcellular location is the cytoplasm. The enzyme catalyses S-sulfanyl-L-cysteinyl-[protein] + uridine(34) in tRNA + AH2 + ATP = 2-thiouridine(34) in tRNA + L-cysteinyl-[protein] + A + AMP + diphosphate + H(+). In terms of biological role, catalyzes the 2-thiolation of uridine at the wobble position (U34) of tRNA, leading to the formation of s(2)U34. The chain is tRNA-specific 2-thiouridylase MnmA from Desulforudis audaxviator (strain MP104C).